A 378-amino-acid polypeptide reads, in one-letter code: Chaperone protein DnaJ (378 aa).

Residues 5 to 70 (DYYEVLGLQK…EKRAMYDQYG (66 aa)) form the J domain. The CR-type zinc-finger motif lies at 135–213 (GVKKDIRIRT…CHGDGRVEKT (79 aa)). Positions 148, 151, 165, 168, 187, 190, 201, and 204 each coordinate Zn(2+). 4 CXXCXGXG motif repeats span residues 148–155 (CDTCHGSG), 165–172 (CPHCHGSG), 187–194 (CPSCHGTG), and 201–208 (CKSCHGDG).

This sequence belongs to the DnaJ family. Homodimer. The cofactor is Zn(2+).

The protein resides in the cytoplasm. Participates actively in the response to hyperosmotic and heat shock by preventing the aggregation of stress-denatured proteins and by disaggregating proteins, also in an autonomous, DnaK-independent fashion. Unfolded proteins bind initially to DnaJ; upon interaction with the DnaJ-bound protein, DnaK hydrolyzes its bound ATP, resulting in the formation of a stable complex. GrpE releases ADP from DnaK; ATP binding to DnaK triggers the release of the substrate protein, thus completing the reaction cycle. Several rounds of ATP-dependent interactions between DnaJ, DnaK and GrpE are required for fully efficient folding. Also involved, together with DnaK and GrpE, in the DNA replication of plasmids through activation of initiation proteins. The sequence is that of Chaperone protein DnaJ from Glaesserella parasuis serovar 5 (strain SH0165) (Haemophilus parasuis).